Reading from the N-terminus, the 325-residue chain is Tetraacyldisaccharide 4'-kinase (325 aa).

An ATP-binding site is contributed by 58–65; that stretch reads TVGGSGKT.

Belongs to the LpxK family.

It carries out the reaction a lipid A disaccharide + ATP = a lipid IVA + ADP + H(+). It participates in glycolipid biosynthesis; lipid IV(A) biosynthesis; lipid IV(A) from (3R)-3-hydroxytetradecanoyl-[acyl-carrier-protein] and UDP-N-acetyl-alpha-D-glucosamine: step 6/6. Its function is as follows. Transfers the gamma-phosphate of ATP to the 4'-position of a tetraacyldisaccharide 1-phosphate intermediate (termed DS-1-P) to form tetraacyldisaccharide 1,4'-bis-phosphate (lipid IVA). This Coxiella burnetii (strain CbuK_Q154) (Coxiella burnetii (strain Q154)) protein is Tetraacyldisaccharide 4'-kinase.